A 277-amino-acid chain; its full sequence is MLITKYQGSGNDFIIIDNRDNFVYKEIEKLGLSINEFVRKLCEQHTSVGADGVILIEKARNTKNHFSWAFFNADGSAAEMCGNGSRCAARFAYEKDIAPKDIVFETIAGEIEAHIMDSKRVKVQLTPYHSHQKNIEIKTEYGTFKGHFVNTGVPHFVIFVDEDELDNLDVEKVGRAIRYHEYFAPKGTNVNFVAKTKNGSFRIRTYERGVEGETLACGTGSAACGINAYLLGLSASNIVDIITKSGELLKITIENDKVFLEGPTTKVFEGMLSYEIF.

Substrate contacts are provided by asparagine 11 and asparagine 72. Residue cysteine 81 is the Proton donor of the active site. Substrate-binding positions include 82–83, asparagine 189, and 207–208; these read GN and ER. Cysteine 217 serves as the catalytic Proton acceptor. 218 to 219 provides a ligand contact to substrate; the sequence is GT.

The protein belongs to the diaminopimelate epimerase family. In terms of assembly, homodimer.

Its subcellular location is the cytoplasm. The catalysed reaction is (2S,6S)-2,6-diaminopimelate = meso-2,6-diaminopimelate. The protein operates within amino-acid biosynthesis; L-lysine biosynthesis via DAP pathway; DL-2,6-diaminopimelate from LL-2,6-diaminopimelate: step 1/1. Functionally, catalyzes the stereoinversion of LL-2,6-diaminopimelate (L,L-DAP) to meso-diaminopimelate (meso-DAP), a precursor of L-lysine and an essential component of the bacterial peptidoglycan. The protein is Diaminopimelate epimerase of Hydrogenobaculum sp. (strain Y04AAS1).